Consider the following 356-residue polypeptide: Glutamate 5-kinase (356 aa).

Residue Lys-6 participates in ATP binding. Substrate-binding residues include Ser-46, Asp-135, and Asn-147. 202–208 (TGGMRSK) serves as a coordination point for ATP. The 78-residue stretch at 265–342 (KGIIVVDRGA…SEVRKLLNTT (78 aa)) folds into the PUA domain.

Belongs to the glutamate 5-kinase family.

It localises to the cytoplasm. The catalysed reaction is L-glutamate + ATP = L-glutamyl 5-phosphate + ADP. Its pathway is amino-acid biosynthesis; L-proline biosynthesis; L-glutamate 5-semialdehyde from L-glutamate: step 1/2. Its function is as follows. Catalyzes the transfer of a phosphate group to glutamate to form L-glutamate 5-phosphate. The polypeptide is Glutamate 5-kinase (Aquifex aeolicus (strain VF5)).